The chain runs to 155 residues: V-type proton ATPase 16 kDa proteolipid subunit c (155 aa).

Residues 1–10 lie on the Lumenal side of the membrane; the sequence is MSEAKNGPEY. The helical transmembrane segment at 11–33 threads the bilayer; the sequence is ASFFAVMGASAAMVFSALGAAYG. At 34 to 55 the chain is on the cytoplasmic side; the sequence is TAKSGTGIAAMSVMRPEMIMKS. Residues 56-76 traverse the membrane as a helical segment; it reads IIPVVMAGIIAIYGLVVAVLI. Residues 77–92 are Lumenal-facing; the sequence is ANSLNDGISLYRSFLQ. Residues 93-114 form a helical membrane-spanning segment; it reads LGAGLSVGLSGLAAGFAIGIVG. Residues 115–131 are Cytoplasmic-facing; the sequence is DAGVRGTAQQPRLFVGM. The helical transmembrane segment at 132-152 threads the bilayer; sequence ILILIFAEVLGLYGLIVALIL. Residues 153–155 lie on the Lumenal side of the membrane; it reads STK.

This sequence belongs to the V-ATPase proteolipid subunit family. As to quaternary structure, V-ATPase is a heteromultimeric enzyme made up of two complexes: the ATP-hydrolytic V1 complex and the proton translocation V0 complex. The V1 complex consists of three catalytic AB heterodimers that form a heterohexamer, three peripheral stalks each consisting of EG heterodimers, one central rotor including subunits D and F, and the regulatory subunits C and H. The proton translocation complex V0 consists of the proton transport subunit a, a ring of proteolipid subunits c9c'', rotary subunit d, subunits e and f, and the accessory subunits ATP6AP1/Ac45 and ATP6AP2/PRR. Interacts with the V0 complex V-ATPase subunit a4 ATP6V0A4. Interacts with LASS2. Interacts with RNF182; this interaction leads to ubiquitination and degradation via the proteasome pathway. Ubiquitinated by RNF182, leading to its degradation via the ubiquitin-proteasome pathway. Expressed in brain (at protein level).

It localises to the cytoplasmic vesicle. The protein localises to the clathrin-coated vesicle membrane. It is found in the secretory vesicle. Its subcellular location is the synaptic vesicle membrane. Proton-conducting pore forming subunit of the V0 complex of vacuolar(H+)-ATPase (V-ATPase), a multisubunit enzyme composed of a peripheral complex (V1) that hydrolyzes ATP and a membrane integral complex (V0) that translocates protons. V-ATPase is responsible for acidifying and maintaining the pH of intracellular compartments and in some cell types, is targeted to the plasma membrane, where it is responsible for acidifying the extracellular environment. The chain is V-type proton ATPase 16 kDa proteolipid subunit c (ATP6V0C) from Bos taurus (Bovine).